The following is a 288-amino-acid chain: MKIIVPATSANIGPGFDSVGVALSKYLEIEVLEESQEWVIEHDLNPRIPKDRRNLLVKIALQLAPDIQPRRLKMTSDIPLARGLGSSSSVIVAGIELANQLAHLNLSDYQKLKIATKIEGHPDNVAPAIYGNLVVSSSSRNQVSAVVADFPDADFIAYIPDYELRTVESRQVLPNRLSYKEAVAASSIANVAIAALLKGDMKIAGRAIESDLFHEKYRQPLIKEFSDIKFLARKNGSYATYISGAGPTVMVLSPKHKTETIYQLLQKQNFKGQIFRLQVDTEGVRVEK.

79–89 (PLARGLGSSSS) lines the ATP pocket.

It belongs to the GHMP kinase family. Homoserine kinase subfamily.

It is found in the cytoplasm. The catalysed reaction is L-homoserine + ATP = O-phospho-L-homoserine + ADP + H(+). It functions in the pathway amino-acid biosynthesis; L-threonine biosynthesis; L-threonine from L-aspartate: step 4/5. Its function is as follows. Catalyzes the ATP-dependent phosphorylation of L-homoserine to L-homoserine phosphate. This Streptococcus sanguinis (strain SK36) protein is Homoserine kinase.